Consider the following 482-residue polypeptide: Docking protein 1 (482 aa).

At Met-1 the chain carries N-acetylmethionine. In terms of domain architecture, PH spans 4–119 (AVMEGPLFLQ…WVQTLCRTAF (116 aa)). Ser-48 bears the Phosphoserine mark. In terms of domain architecture, IRS-type PTB spans 151–259 (EGSQFWVTSQ…QQQKAQGKVG (109 aa)). Phosphoserine is present on residues Ser-269 and Ser-290. Residues 269–328 (SHDGETEGKTVPPPVPQDPLGSPPALYAEPLDSLRIPPGPSQDSVYSDPLGSTPAGAGEG) form a disordered region. Phosphotyrosine is present on residues Tyr-295, Tyr-336, Tyr-340, Tyr-361, and Tyr-376. The segment at 353-373 (TDSKEDPIYDEPEGLAPAPPR) is disordered. Tyr-397 is subject to Phosphotyrosine; by INSR. The disordered stretch occupies residues 398–482 (ELPYNPATDD…RAGVKSEGST (85 aa)). Tyr-408 is subject to Phosphotyrosine. The segment covering 410–423 (VPPPRSPKPAPAPK) has biased composition (pro residues). Residue Ser-415 is modified to Phosphoserine. A compositionally biased stretch (polar residues) spans 432 to 459 (SGTTRGSGSKGFSSDTALYSQVQKSGTS). Tyr-450 is modified (phosphotyrosine).

The protein belongs to the DOK family. Type A subfamily. Interacts with RasGAP, INPP5D/SHIP1 and ABL1. Interacts directly with phosphorylated ITGB3. Interacts with SRMS (via the SH2 and SH3 domains). Constitutively tyrosine-phosphorylated. Phosphorylated by TEC. Phosphorylated on tyrosine residues by the insulin receptor kinase. Results in the negative regulation of the insulin signaling pathway. Phosphorylated by LYN. Phosphorylated on tyrosine residues by SRMS. In terms of tissue distribution, expressed in lung, spleen, skeletal muscle and kidney.

The protein localises to the cytoplasm. It localises to the nucleus. DOK proteins are enzymatically inert adaptor or scaffolding proteins. They provide a docking platform for the assembly of multimolecular signaling complexes. DOK1 appears to be a negative regulator of the insulin signaling pathway. Modulates integrin activation by competing with talin for the same binding site on ITGB3. This is Docking protein 1 (Dok1) from Mus musculus (Mouse).